A 157-amino-acid chain; its full sequence is Small ribosomal subunit protein uS7 (157 aa).

The protein belongs to the universal ribosomal protein uS7 family. Part of the 30S ribosomal subunit. Contacts proteins S9 and S11.

In terms of biological role, one of the primary rRNA binding proteins, it binds directly to 16S rRNA where it nucleates assembly of the head domain of the 30S subunit. Is located at the subunit interface close to the decoding center, probably blocks exit of the E-site tRNA. The chain is Small ribosomal subunit protein uS7 from Leptospira biflexa serovar Patoc (strain Patoc 1 / Ames).